We begin with the raw amino-acid sequence, 269 residues long: Ubiquinone/menaquinone biosynthesis C-methyltransferase UbiE (269 aa).

S-adenosyl-L-methionine contacts are provided by residues T92, D113, and 141-142 (NA).

This sequence belongs to the class I-like SAM-binding methyltransferase superfamily. MenG/UbiE family.

It catalyses the reaction a 2-demethylmenaquinol + S-adenosyl-L-methionine = a menaquinol + S-adenosyl-L-homocysteine + H(+). The catalysed reaction is a 2-methoxy-6-(all-trans-polyprenyl)benzene-1,4-diol + S-adenosyl-L-methionine = a 5-methoxy-2-methyl-3-(all-trans-polyprenyl)benzene-1,4-diol + S-adenosyl-L-homocysteine + H(+). It participates in quinol/quinone metabolism; menaquinone biosynthesis; menaquinol from 1,4-dihydroxy-2-naphthoate: step 2/2. It functions in the pathway cofactor biosynthesis; ubiquinone biosynthesis. Its function is as follows. Methyltransferase required for the conversion of demethylmenaquinol (DMKH2) to menaquinol (MKH2) and the conversion of 2-polyprenyl-6-methoxy-1,4-benzoquinol (DDMQH2) to 2-polyprenyl-3-methyl-6-methoxy-1,4-benzoquinol (DMQH2). This is Ubiquinone/menaquinone biosynthesis C-methyltransferase UbiE from Brucella melitensis biotype 2 (strain ATCC 23457).